A 141-amino-acid chain; its full sequence is Nucleoside diphosphate kinase (141 aa).

Lys11, Phe59, Arg87, Thr93, Arg104, and Asn114 together coordinate ATP. The active-site Pros-phosphohistidine intermediate is His117.

This sequence belongs to the NDK family. As to quaternary structure, homotetramer. Requires Mg(2+) as cofactor.

The protein resides in the cytoplasm. It carries out the reaction a 2'-deoxyribonucleoside 5'-diphosphate + ATP = a 2'-deoxyribonucleoside 5'-triphosphate + ADP. The catalysed reaction is a ribonucleoside 5'-diphosphate + ATP = a ribonucleoside 5'-triphosphate + ADP. Major role in the synthesis of nucleoside triphosphates other than ATP. The ATP gamma phosphate is transferred to the NDP beta phosphate via a ping-pong mechanism, using a phosphorylated active-site intermediate. The polypeptide is Nucleoside diphosphate kinase (Legionella pneumophila subsp. pneumophila (strain Philadelphia 1 / ATCC 33152 / DSM 7513)).